Reading from the N-terminus, the 78-residue chain is MPVIAIIAIVIIVIILNKTGVSDSLTALTLATVAALLTGGGAAGAASVALTPFVGVPVGIFVGIYVFAKVVRLISGKK.

The first 45 residues, 1–45 (MPVIAIIAIVIIVIILNKTGVSDSLTALTLATVAALLTGGGAAGA), serve as a signal peptide directing secretion.

The protein to E.coli YkfL.

This is an uncharacterized protein from Escherichia coli (strain K12).